A 380-amino-acid chain; its full sequence is Cytochrome b (380 aa).

4 helical membrane-spanning segments follow: residues 34 to 54 (FGSLLGICLTMQILTGLLLAT), 78 to 99 (WLIRNLHANGASFFFICIYLHI), 114 to 134 (WNTGVILLLTLMATAFVGYVL), and 179 to 199 (FFALHFLLPFAIAGLTLIHLT). Heme b-binding residues include histidine 84 and histidine 98. Histidine 183 and histidine 197 together coordinate heme b. Position 202 (histidine 202) interacts with a ubiquinone. The next 4 helical transmembrane spans lie at 227-247 (LKDILGLTLLLLPLTTLALFS), 289-309 (LGGVLALAASVLILFLCPLLH), 321-341 (LSQLLFWTLTANLLILTWVGS), and 348-368 (FIIIGQLASLTYFFTLLILFP).

This sequence belongs to the cytochrome b family. As to quaternary structure, the cytochrome bc1 complex contains 11 subunits: 3 respiratory subunits (MT-CYB, CYC1 and UQCRFS1), 2 core proteins (UQCRC1 and UQCRC2) and 6 low-molecular weight proteins (UQCRH/QCR6, UQCRB/QCR7, UQCRQ/QCR8, UQCR10/QCR9, UQCR11/QCR10 and a cleavage product of UQCRFS1). This cytochrome bc1 complex then forms a dimer. It depends on heme b as a cofactor.

The protein resides in the mitochondrion inner membrane. Its function is as follows. Component of the ubiquinol-cytochrome c reductase complex (complex III or cytochrome b-c1 complex) that is part of the mitochondrial respiratory chain. The b-c1 complex mediates electron transfer from ubiquinol to cytochrome c. Contributes to the generation of a proton gradient across the mitochondrial membrane that is then used for ATP synthesis. The protein is Cytochrome b (MT-CYB) of Ciconia ciconia (White stork).